The sequence spans 95 residues: Protein TusB (95 aa).

It belongs to the DsrH/TusB family. As to quaternary structure, heterohexamer, formed by a dimer of trimers. The hexameric TusBCD complex contains 2 copies each of TusB, TusC and TusD. The TusBCD complex interacts with TusE.

Its subcellular location is the cytoplasm. In terms of biological role, part of a sulfur-relay system required for 2-thiolation of 5-methylaminomethyl-2-thiouridine (mnm(5)s(2)U) at tRNA wobble positions. In Pectobacterium atrosepticum (strain SCRI 1043 / ATCC BAA-672) (Erwinia carotovora subsp. atroseptica), this protein is Protein TusB.